The primary structure comprises 450 residues: Phosphoglucosamine mutase (450 aa).

S101 serves as the catalytic Phosphoserine intermediate. Mg(2+) is bound by residues S101, D240, D242, and D244. Position 101 is a phosphoserine (S101).

Belongs to the phosphohexose mutase family. Mg(2+) serves as cofactor. Post-translationally, activated by phosphorylation.

The enzyme catalyses alpha-D-glucosamine 1-phosphate = D-glucosamine 6-phosphate. Its function is as follows. Catalyzes the conversion of glucosamine-6-phosphate to glucosamine-1-phosphate. In Streptococcus gordonii (strain Challis / ATCC 35105 / BCRC 15272 / CH1 / DL1 / V288), this protein is Phosphoglucosamine mutase.